Reading from the N-terminus, the 225-residue chain is 3-dehydroquinate dehydratase (225 aa).

3-dehydroquinate-binding positions include Ser-6, 30-32, and Arg-62; that span reads EWR. Residue His-118 is the Proton donor/acceptor of the active site. Lys-143 functions as the Schiff-base intermediate with substrate in the catalytic mechanism. 3 residues coordinate 3-dehydroquinate: Arg-186, Ser-205, and Gln-209.

The protein belongs to the type-I 3-dehydroquinase family. Homodimer.

The catalysed reaction is 3-dehydroquinate = 3-dehydroshikimate + H2O. It participates in metabolic intermediate biosynthesis; chorismate biosynthesis; chorismate from D-erythrose 4-phosphate and phosphoenolpyruvate: step 3/7. Its function is as follows. Involved in the third step of the chorismate pathway, which leads to the biosynthesis of aromatic amino acids. Catalyzes the cis-dehydration of 3-dehydroquinate (DHQ) and introduces the first double bond of the aromatic ring to yield 3-dehydroshikimate. The sequence is that of 3-dehydroquinate dehydratase from Streptococcus pneumoniae (strain P1031).